A 474-amino-acid polypeptide reads, in one-letter code: tRNA-2-methylthio-N(6)-dimethylallyladenosine synthase (474 aa).

Residues 21–138 (ERVYVETQGC…LPQMLARRRS (118 aa)) form the MTTase N-terminal domain. [4Fe-4S] cluster-binding residues include cysteine 30, cysteine 67, cysteine 101, cysteine 175, cysteine 179, and cysteine 182. Residues 161-395 (RAEGPTAYVS…ARLHEQQSAA (235 aa)) enclose the Radical SAM core domain. The region spanning 397–460 (RALLGTRQSV…THSLRGRVVS (64 aa)) is the TRAM domain.

The protein belongs to the methylthiotransferase family. MiaB subfamily. In terms of assembly, monomer. The cofactor is [4Fe-4S] cluster.

The protein localises to the cytoplasm. It catalyses the reaction N(6)-dimethylallyladenosine(37) in tRNA + (sulfur carrier)-SH + AH2 + 2 S-adenosyl-L-methionine = 2-methylsulfanyl-N(6)-dimethylallyladenosine(37) in tRNA + (sulfur carrier)-H + 5'-deoxyadenosine + L-methionine + A + S-adenosyl-L-homocysteine + 2 H(+). Functionally, catalyzes the methylthiolation of N6-(dimethylallyl)adenosine (i(6)A), leading to the formation of 2-methylthio-N6-(dimethylallyl)adenosine (ms(2)i(6)A) at position 37 in tRNAs that read codons beginning with uridine. This chain is tRNA-2-methylthio-N(6)-dimethylallyladenosine synthase, found in Halorhodospira halophila (strain DSM 244 / SL1) (Ectothiorhodospira halophila (strain DSM 244 / SL1)).